A 428-amino-acid polypeptide reads, in one-letter code: 3-phosphoshikimate 1-carboxyvinyltransferase (428 aa).

3-phosphoshikimate contacts are provided by lysine 22, serine 23, and arginine 27. Lysine 22 serves as a coordination point for phosphoenolpyruvate. Residues glycine 98 and arginine 126 each contribute to the phosphoenolpyruvate site. Positions 172, 173, 174, 200, 316, 339, and 343 each coordinate 3-phosphoshikimate. Position 174 (glutamine 174) interacts with phosphoenolpyruvate. Residue aspartate 316 is the Proton acceptor of the active site. Arginine 347, arginine 389, and lysine 414 together coordinate phosphoenolpyruvate.

The protein belongs to the EPSP synthase family. Monomer.

It localises to the cytoplasm. The catalysed reaction is 3-phosphoshikimate + phosphoenolpyruvate = 5-O-(1-carboxyvinyl)-3-phosphoshikimate + phosphate. It functions in the pathway metabolic intermediate biosynthesis; chorismate biosynthesis; chorismate from D-erythrose 4-phosphate and phosphoenolpyruvate: step 6/7. Catalyzes the transfer of the enolpyruvyl moiety of phosphoenolpyruvate (PEP) to the 5-hydroxyl of shikimate-3-phosphate (S3P) to produce enolpyruvyl shikimate-3-phosphate and inorganic phosphate. The polypeptide is 3-phosphoshikimate 1-carboxyvinyltransferase (Psychromonas ingrahamii (strain DSM 17664 / CCUG 51855 / 37)).